A 218-amino-acid polypeptide reads, in one-letter code: Small ribosomal subunit protein uS4 (218 aa).

The 65-residue stretch at Arg-111 to Glu-175 folds into the S4 RNA-binding domain. The interval Lys-192–Arg-218 is disordered. The span at Lys-198–Gly-209 shows a compositional bias: basic and acidic residues.

Belongs to the universal ribosomal protein uS4 family. Part of the 30S ribosomal subunit. Contacts protein S5. The interaction surface between S4 and S5 is involved in control of translational fidelity.

Functionally, one of the primary rRNA binding proteins, it binds directly to 16S rRNA where it nucleates assembly of the body of the 30S subunit. Its function is as follows. With S5 and S12 plays an important role in translational accuracy. The protein is Small ribosomal subunit protein uS4 of Methanosarcina acetivorans (strain ATCC 35395 / DSM 2834 / JCM 12185 / C2A).